Consider the following 514-residue polypeptide: 3-octaprenyl-4-hydroxybenzoate carboxy-lyase (514 aa).

Position 177 (asparagine 177) interacts with Mn(2+). Prenylated FMN contacts are provided by residues isoleucine 180 to arginine 182, arginine 194 to leucine 196, and arginine 199 to glycine 200. Residue glutamate 243 participates in Mn(2+) binding. Aspartate 314 acts as the Proton donor in catalysis.

It belongs to the UbiD family. As to quaternary structure, homohexamer. The cofactor is prenylated FMN. Requires Mn(2+) as cofactor.

The protein resides in the cell membrane. It carries out the reaction a 4-hydroxy-3-(all-trans-polyprenyl)benzoate + H(+) = a 2-(all-trans-polyprenyl)phenol + CO2. It participates in cofactor biosynthesis; ubiquinone biosynthesis. In terms of biological role, catalyzes the decarboxylation of 3-octaprenyl-4-hydroxy benzoate to 2-octaprenylphenol, an intermediate step in ubiquinone biosynthesis. This chain is 3-octaprenyl-4-hydroxybenzoate carboxy-lyase, found in Bordetella pertussis (strain Tohama I / ATCC BAA-589 / NCTC 13251).